Reading from the N-terminus, the 294-residue chain is Glyceraldehyde-3-phosphate dehydrogenase (294 aa).

NAD(+)-binding residues include Asp-19, Arg-63, and Thr-105. Residues 134–136 (SCT) and Thr-165 contribute to the D-glyceraldehyde 3-phosphate site. Cys-135 acts as the Nucleophile in catalysis. Lys-177 carries the post-translational modification N6-acetyllysine. D-glyceraldehyde 3-phosphate contacts are provided by residues 194 to 195 (TG) and Arg-217. The residue at position 234 (Lys-234) is an N6-acetyllysine.

This sequence belongs to the glyceraldehyde-3-phosphate dehydrogenase family. In terms of assembly, homotetramer.

It is found in the cytoplasm. The enzyme catalyses D-glyceraldehyde 3-phosphate + phosphate + NAD(+) = (2R)-3-phospho-glyceroyl phosphate + NADH + H(+). The protein operates within carbohydrate degradation; glycolysis; pyruvate from D-glyceraldehyde 3-phosphate: step 1/5. Catalyzes the oxidative phosphorylation of glyceraldehyde 3-phosphate (G3P) to 1,3-bisphosphoglycerate (BPG) using the cofactor NAD. The first reaction step involves the formation of a hemiacetal intermediate between G3P and a cysteine residue, and this hemiacetal intermediate is then oxidized to a thioester, with concomitant reduction of NAD to NADH. The reduced NADH is then exchanged with the second NAD, and the thioester is attacked by a nucleophilic inorganic phosphate to produce BPG. This chain is Glyceraldehyde-3-phosphate dehydrogenase (gap), found in Pseudescherichia vulneris (Escherichia vulneris).